The primary structure comprises 174 residues: Interferon gamma (174 aa).

An N-terminal signal peptide occupies residues Met1–Cys23. Gln24 bears the Pyrrolidone carboxylic acid mark. N-linked (GlcNAc...) asparagine glycosylation is found at Asn39 and Asn106.

The protein belongs to the type II (or gamma) interferon family. In terms of assembly, homodimer. Interacts with IFNGR1 (via extracellular domain); this interaction promotes IFNGR1 dimerization. As to expression, released primarily from activated T lymphocytes.

It is found in the secreted. Type II interferon produced by immune cells such as T-cells and NK cells that plays crucial roles in antimicrobial, antiviral, and antitumor responses by activating effector immune cells and enhancing antigen presentation. Primarily signals through the JAK-STAT pathway after interaction with its receptor IFNGR1 to affect gene regulation. Upon IFNG binding, IFNGR1 intracellular domain opens out to allow association of downstream signaling components JAK2, JAK1 and STAT1, leading to STAT1 activation, nuclear translocation and transcription of IFNG-regulated genes. Many of the induced genes are transcription factors such as IRF1 that are able to further drive regulation of a next wave of transcription. Plays a role in class I antigen presentation pathway by inducing a replacement of catalytic proteasome subunits with immunoproteasome subunits. In turn, increases the quantity, quality, and repertoire of peptides for class I MHC loading. Increases the efficiency of peptide generation also by inducing the expression of activator PA28 that associates with the proteasome and alters its proteolytic cleavage preference. Up-regulates as well MHC II complexes on the cell surface by promoting expression of several key molecules such as cathepsins B/CTSB, H/CTSH, and L/CTSL. Participates in the regulation of hematopoietic stem cells during development and under homeostatic conditions by affecting their development, quiescence, and differentiation. This chain is Interferon gamma (IFNG), found in Mesocricetus auratus (Golden hamster).